The following is a 115-amino-acid chain: Putative TGFB1-induced anti-apoptotic factor 1 (115 aa).

As to expression, not detectable in normal kidney and liver. Up-regulated in chronic and acute allograft rejection: expressed in the inflammatory infiltrate and in tubular epithelial cells.

The protein resides in the nucleus. Inhibits the cytotoxic effects of TNF-alpha and overexpressed TNF receptor adapters TRADD, FADD, and RIPK1. Involved in TGF-beta1 inhibition of IkappaB-alpha expression and suppression of TNF-mediated IkappaB-alpha degradation. The polypeptide is Putative TGFB1-induced anti-apoptotic factor 1 (MYO18A) (Homo sapiens (Human)).